Here is a 298-residue protein sequence, read N- to C-terminus: HTH-type transcriptional regulator YhaJ (298 aa).

The 58-residue stretch at 7-64 (LTLEALRVMDAIDRRGSFAAAADELGRVPSALSYTMQKLEEELDVVLFDRSGHRTKFT) folds into the HTH lysR-type domain. The segment at residues 24–43 (FAAAADELGRVPSALSYTMQ) is a DNA-binding region (H-T-H motif).

Belongs to the LysR transcriptional regulatory family.

Functionally, positive regulator partially required for expression of genes in the locus of effacement (LEE) large pathogenicity island (PAI). Also partially responsible for expression of neighboring gene dlsT (yhaO) during late exponential growth. Binds to DNA of promoter 1 in LEE and DNA from the dlsT promoter region. The protein is HTH-type transcriptional regulator YhaJ (yhaJ) of Escherichia coli O157:H7.